The sequence spans 211 residues: Uracil phosphoribosyltransferase (211 aa).

Residues Arg78, Arg103, and 130–138 (DPMLATGNS) contribute to the 5-phospho-alpha-D-ribose 1-diphosphate site. Uracil is bound by residues Ile193 and 198–200 (GDA). Asp199 contacts 5-phospho-alpha-D-ribose 1-diphosphate.

The protein belongs to the UPRTase family. Mg(2+) serves as cofactor.

The enzyme catalyses UMP + diphosphate = 5-phospho-alpha-D-ribose 1-diphosphate + uracil. It participates in pyrimidine metabolism; UMP biosynthesis via salvage pathway; UMP from uracil: step 1/1. Allosterically activated by GTP. Catalyzes the conversion of uracil and 5-phospho-alpha-D-ribose 1-diphosphate (PRPP) to UMP and diphosphate. The sequence is that of Uracil phosphoribosyltransferase from Acinetobacter baumannii (strain ATCC 17978 / DSM 105126 / CIP 53.77 / LMG 1025 / NCDC KC755 / 5377).